The primary structure comprises 628 residues: Kelch-like protein diablo (628 aa).

The disordered stretch occupies residues 1–56 (MGDLPGSTGGGSGPAAAGNASGNASSAGNTGLGVAGTTGVDRPPSPARLSHTSEKH). Positions 14–29 (PAAAGNASGNASSAGN) are enriched in low complexity. The BTB domain occupies 74-141 (CDVVLNVGGR…CYTAHIIVEE (68 aa)). In terms of domain architecture, BACK spans 176–278 (CLGIRAFADT…SPKFLVGTVG (103 aa)). Kelch repeat units follow at residues 325 to 371 (VLFA…VLND), 373 to 419 (LYAV…VLDG), 420 to 466 (FLYA…VLGG), 468 to 513 (LYAI…VFNN), 515 to 560 (IYAV…VVNG), and 561 to 607 (QLYA…VMRA).

It functions in the pathway protein modification; protein ubiquitination. Functionally, probable substrate-specific adapter of an E3 ubiquitin-protein ligase complex which mediates the ubiquitination and subsequent proteasomal degradation of target proteins. May have a role in synapse differentiation and growth. The polypeptide is Kelch-like protein diablo (Drosophila pseudoobscura pseudoobscura (Fruit fly)).